Reading from the N-terminus, the 1621-residue chain is Nestin (1621 aa).

Position 1 is an N-acetylmethionine (M1). The interval 1–7 is head; sequence MEGCMGE. Residues 8–43 form a coil 1A region; it reads ESFQMWELNRRLEAYLARVKALEEQNELLSAELGGL. In terms of domain architecture, IF rod spans 8-313; the sequence is ESFQMWELNR…TLLEAENSRL (306 aa). The segment at 44 to 55 is linker 1; sequence RAQSADTSWRAH. Residues 56 to 151 are coil 1B; the sequence is ADDELAALRA…VAHEEERVGL (96 aa). Positions 152-173 are linker 12; sequence NAQAACAPRCPAPPRGPPAPAP. A coil 2A region spans residues 174–192; it reads EVEELARRLGEAWRGAVRG. Positions 193–195 are linker 2; the sequence is YQE. The coil 2B stretch occupies residues 196–313; sequence RVAHMETSLG…TLLEAENSRL (118 aa). S311 carries the post-translational modification Phosphoserine. The tail stretch occupies residues 314-1621; that stretch reads QTPGGGSKTS…DRESWSSGED (1308 aa). T315 carries the phosphothreonine modification. S325 carries the phosphoserine modification. T338 carries the post-translational modification Phosphothreonine. 2 positions are modified to phosphoserine: S355 and S358. The residue at position 388 (T388) is a Phosphothreonine. A phosphoserine mark is found at S398, S471, S476, S548, S564, S578, S588, S638, S680, S702, S746, and S768. Residues 439 to 490 are disordered; it reads SVLPGPEEPGGQRQEASTGQSPEDHASLAPPLSPDHSSLEAKDGESGGSRVF. The tract at residues 670–788 is disordered; it reads LEKENQEPLR…PPEKVDLEPL (119 aa). Composition is skewed to basic and acidic residues over residues 687–725, 736–770, and 779–788; these read EALRPLTKENQEPLRSLEDENKEAFRSLEKENQEPLKTL, LETENHKSLRSLEEQDQETLRTLEKETQQRRRSLG, and PPEKVDLEPL. The residue at position 790 (S790) is a Phosphoserine. Residue K811 forms a Glycyl lysine isopeptide (Lys-Gly) (interchain with G-Cter in SUMO1); alternate linkage. Residue K811 forms a Glycyl lysine isopeptide (Lys-Gly) (interchain with G-Cter in SUMO2); alternate linkage. 3 positions are modified to phosphoserine: S820, S831, and S842. At T851 the chain carries Phosphothreonine. S894, S905, S913, and S934 each carry phosphoserine. A disordered region spans residues 895–1593; it reads LGAWNLENLR…GSALKTSWAG (699 aa). 4 stretches are compositionally biased toward basic and acidic residues: residues 904–936, 949–960, 980–994, and 1012–1024; these read RSPEEVDKESQRNLEEEENLGKGEYQESLRSLE, QRWEDTVEKDQE, LNLREQDGFTGKEEV, and GHPESPEPKEQRG. S1016 bears the Phosphoserine mark. A compositionally biased stretch (low complexity) spans 1085–1098; it reads GSEPAMGESAAGAE. Positions 1099-1110 are enriched in gly residues; the sequence is PGPGQGVGGLGD. 2 stretches are compositionally biased toward basic and acidic residues: residues 1129–1145 and 1159–1184; these read LEAKRVQGLEGPRKDLE and GKSRDPWEPPREGREESEAEAPRGAE. Residues S1261, S1282, S1286, S1310, S1347, S1409, S1418, and S1452 each carry the phosphoserine modification. The span at 1275–1292 shows a compositional bias: acidic residues; that stretch reads PQEEGEESREESEEDELG. Residues 1409–1428 are compositionally biased toward acidic residues; that stretch reads SDGFADEEESGEEGEEDQEE. Low complexity-rich tracts occupy residues 1440–1453 and 1460–1470; these read GSSVGSLQALSSSQ and SDSVSVSVPWD. Residues 1486–1495 are compositionally biased toward polar residues; the sequence is ETESQDSAEP. Phosphoserine is present on residues S1496, S1498, S1577, S1617, and S1618.

It belongs to the intermediate filament family. In terms of assembly, forms homodimers and homotetramers in vitro. In mixtures with other intermediate filament proteins such as vimentin and alpha-internexin, tis protein preferentially forms heterodimers which can assemble to form intermediate filaments if nestin does not exceed 25%. Interacts with FHOD3. In terms of processing, constitutively phosphorylated. This increases during mitosis when the cytoplasmic intermediate filament network is reorganized. CNS stem cells.

Its function is as follows. Required for brain and eye development. Promotes the disassembly of phosphorylated vimentin intermediate filaments (IF) during mitosis and may play a role in the trafficking and distribution of IF proteins and other cellular factors to daughter cells during progenitor cell division. Required for survival, renewal and mitogen-stimulated proliferation of neural progenitor cells. The chain is Nestin (NES) from Homo sapiens (Human).